The primary structure comprises 325 residues: tRNA N6-adenosine threonylcarbamoyltransferase (325 aa).

Histidine 107 and histidine 111 together coordinate Fe cation. Residues 129–133 (LVSGG), aspartate 162, glycine 175, and asparagine 265 each bind substrate. Position 293 (aspartate 293) interacts with Fe cation.

The protein belongs to the KAE1 / TsaD family. Fe(2+) is required as a cofactor.

It is found in the cytoplasm. It carries out the reaction L-threonylcarbamoyladenylate + adenosine(37) in tRNA = N(6)-L-threonylcarbamoyladenosine(37) in tRNA + AMP + H(+). Functionally, required for the formation of a threonylcarbamoyl group on adenosine at position 37 (t(6)A37) in tRNAs that read codons beginning with adenine. Is involved in the transfer of the threonylcarbamoyl moiety of threonylcarbamoyl-AMP (TC-AMP) to the N6 group of A37, together with TsaE and TsaB. TsaD likely plays a direct catalytic role in this reaction. This Sulfurimonas denitrificans (strain ATCC 33889 / DSM 1251) (Thiomicrospira denitrificans (strain ATCC 33889 / DSM 1251)) protein is tRNA N6-adenosine threonylcarbamoyltransferase.